The following is a 1040-amino-acid chain: Probable starch synthase 4, chloroplastic/amyloplastic (1040 aa).

Residues 1 to 42 constitute a chloroplast transit peptide; it reads MTTKLSSFCFLTHGLAGISCEREHGSSRRFFYLPSRRLVSTS. Residues 43–142 form a disordered region; sequence CKMRQQRGFD…KSKTAKKKGE (100 aa). Basic and acidic residues-rich tracts occupy residues 52–61 and 112–124; these read DSSKRQEVKK and NHAD…KDDI. Positions 187-466 form a coiled coil; it reads ELMTMIRSAE…EESKKKSRDE (280 aa). Residues lysine 556, glycine 559, and aspartate 562 each contribute to the ADP site. Tryptophan 679 and glutamine 680 together coordinate (1,4-alpha-D-glucosyl)n. 7 residues coordinate ADP: arginine 849, lysine 854, lysine 906, aspartate 908, tyrosine 916, leucine 933, and threonine 934.

This sequence belongs to the glycosyltransferase 1 family. Bacterial/plant glycogen synthase subfamily. Interacts with PTST2. Interacts with PII1; the interaction is essential for the initiation of starch granules biosynthesis in leaf chloroplasts. Expressed in leaves and flowers.

It is found in the plastid. Its subcellular location is the chloroplast. It localises to the amyloplast. The protein localises to the chloroplast stroma. The catalysed reaction is [(1-&gt;4)-alpha-D-glucosyl](n) + ADP-alpha-D-glucose = [(1-&gt;4)-alpha-D-glucosyl](n+1) + ADP + H(+). It participates in glycan biosynthesis; starch biosynthesis. Its function is as follows. Probably involved in the priming of starch granule formation. May play a regulatory role in the control of starch accumulation in plastids. Is necessary and sufficient to establish the correct number of starch granules observed in chloroplasts. The polypeptide is Probable starch synthase 4, chloroplastic/amyloplastic (Arabidopsis thaliana (Mouse-ear cress)).